Consider the following 141-residue polypeptide: Hemoglobin subunit alpha-D (141 aa).

The Globin domain maps to Met-1 to Arg-141. Positions 58 and 87 each coordinate heme b.

Belongs to the globin family. Heterotetramer of two alpha-D chains and two beta chains. As to expression, red blood cells.

Its function is as follows. Involved in oxygen transport from the lung to the various peripheral tissues. The protein is Hemoglobin subunit alpha-D (HBAD) of Coturnix japonica (Japanese quail).